A 157-amino-acid polypeptide reads, in one-letter code: MDKLKKVLSGQDTEDRSGLSEVVESSSLSWSTRIKGFIVCFALGILCSLLGTLLLWVSRKGLFAVFYTLGNITSIGSTMFLMGPLKQLKRMFEPTRLIATILVLLFFVLTLCSAFLWNKGLALIFCILQSLALTWYSLSYIPYARDAVKKCFAVCLT.

Met-1 is modified (N-acetylmethionine). Over 1–36 (MDKLKKVLSGQDTEDRSGLSEVVESSSLSWSTRIKG) the chain is Cytoplasmic. A Phosphoserine modification is found at Ser-9. The chain crosses the membrane as a helical span at residues 37–57 (FIVCFALGILCSLLGTLLLWV). Residues 58–61 (SRKG) are Lumenal-facing. The helical transmembrane segment at 62 to 82 (LFAVFYTLGNITSIGSTMFLM) threads the bilayer. Residues 83 to 96 (GPLKQLKRMFEPTR) lie on the Cytoplasmic side of the membrane. The chain crosses the membrane as a helical span at residues 97-117 (LIATILVLLFFVLTLCSAFLW). Residues 118–120 (NKG) lie on the Lumenal side of the membrane. Residues 121–141 (LALIFCILQSLALTWYSLSYI) form a helical membrane-spanning segment. At 142 to 157 (PYARDAVKKCFAVCLT) the chain is on the cytoplasmic side.

Belongs to the SFT2 family.

The protein resides in the membrane. May be involved in fusion of retrograde transport vesicles derived from an endocytic compartment with the Golgi complex. The chain is Vesicle transport protein SFT2B from Rattus norvegicus (Rat).